A 193-amino-acid polypeptide reads, in one-letter code: DNA damage-inducible transcript 4-like protein (193 aa).

The protein belongs to the DDIT4 family.

Its subcellular location is the cytoplasm. Inhibits cell growth by regulating the TOR signaling pathway upstream of the TSC1-TSC2 complex and downstream of AKT1. The protein is DNA damage-inducible transcript 4-like protein (DDIT4L) of Pongo abelii (Sumatran orangutan).